The sequence spans 415 residues: Serine hydroxymethyltransferase 1 (415 aa).

(6S)-5,6,7,8-tetrahydrofolate is bound by residues Leu122 and 126–128 (GHL). Lys230 is subject to N6-(pyridoxal phosphate)lysine.

Belongs to the SHMT family. In terms of assembly, homodimer. Requires pyridoxal 5'-phosphate as cofactor.

It localises to the cytoplasm. The catalysed reaction is (6R)-5,10-methylene-5,6,7,8-tetrahydrofolate + glycine + H2O = (6S)-5,6,7,8-tetrahydrofolate + L-serine. Its pathway is one-carbon metabolism; tetrahydrofolate interconversion. It functions in the pathway amino-acid biosynthesis; glycine biosynthesis; glycine from L-serine: step 1/1. Its function is as follows. Catalyzes the reversible interconversion of serine and glycine with tetrahydrofolate (THF) serving as the one-carbon carrier. This reaction serves as the major source of one-carbon groups required for the biosynthesis of purines, thymidylate, methionine, and other important biomolecules. Also exhibits THF-independent aldolase activity toward beta-hydroxyamino acids, producing glycine and aldehydes, via a retro-aldol mechanism. This is Serine hydroxymethyltransferase 1 from Burkholderia thailandensis (strain ATCC 700388 / DSM 13276 / CCUG 48851 / CIP 106301 / E264).